The chain runs to 616 residues: Male-specific lethal 1 homolog (616 aa).

Residues 1–116 (MTMRSAVFKA…PPATKQAGIG (116 aa)) are disordered. Position 66 is a phosphoserine (Ser66). Positions 81–91 (GLLLPAGAAPG) are enriched in low complexity. The residue at position 127 (Ser127) is a Phosphoserine. Residues 152-218 (TPWAGDKGGA…LGGGGGSGAS (67 aa)) are disordered. Residues 153 to 171 (PWAGDKGGAAPPAATASDP) are compositionally biased toward low complexity. Residues 172 to 186 (AGPPPLPLPGPPPLA) are compositionally biased toward pro residues. A compositionally biased stretch (low complexity) spans 187 to 196 (PTATAGTLAA). The residue at position 207 (Ser207) is a Phosphoserine. A coiled-coil region spans residues 215–284 (SGASSQAACL…RDNEKERHKL (70 aa)). The segment at 225–239 (KQILLLQLDLIEQQQ) is interaction with MSL2. A Glycyl lysine isopeptide (Lys-Gly) (interchain with G-Cter in SUMO2) cross-link involves residue Lys303. Positions 306–422 (RQPELCETSQ…PKEKAFSSEM (117 aa)) are disordered. Residues 319–348 (SKPFSCGRSGKGHKRKTPFGNTERKTPVKK) carry the Nuclear localization signal motif. Lys355 carries the N6-acetyllysine modification. Residues Thr358 and Thr360 each carry the phosphothreonine modification. Ser364 is subject to Phosphoserine. Glycyl lysine isopeptide (Lys-Gly) (interchain with G-Cter in SUMO2) cross-links involve residues Lys367 and Lys380. The span at 378–394 (VCKRELRSQETPEKPRS) shows a compositional bias: basic and acidic residues. Ser385 bears the Phosphoserine mark. Thr388 carries the phosphothreonine modification. Ser395 is modified (phosphoserine). Residues 395–409 (SVDTPPRLSTPQKGP) show a composition bias toward polar residues. Thr398 and Thr404 each carry phosphothreonine. Phosphoserine is present on residues Ser444, Ser452, and Ser484. The PEHE domain occupies 474–593 (VLAVPSWRDH…LAPQNFELPW (120 aa)). An interaction with KAT8 HAT domain region spans residues 498–516 (ENLDDSVFSKRHAKLELDE). The Bipartite nuclear localization signal signature appears at 507 to 521 (KRHAKLELDEKRRKR). Residues 552 to 593 (EVTSFFPEPDDVESLLITPFLPVVAFGRPLPKLAPQNFELPW) form an interaction with MSL3 MRG domain region.

The protein belongs to the msl-1 family. As to quaternary structure, component of a multisubunit histone acetyltransferase complex (MSL) at least composed of the KAT8/MOF/MYST1, MSL1/hampin, MSL2 and MSL3. Interacts (via PEHE domain) with KAT8 (via HAT domain) and MSL3 (via MRG domain); both interactions are direct. Directly interacts with MSL2 via its coiled coil domain. Directly interacts with NUPR1. Interacts with TP53BP1; this interaction may be required for MSL1 DNA repair activity, but not for histone acetyltransferase activity. Forms a MSL heterotetrameric core with MSL2. Isoform 1 and isoform 3 interact with TTC4. Isoform 1 interacts with ECM2 and PIHD1. Post-translationally, sumoylated with SUMO1. In terms of tissue distribution, isoform 3 and isoform 5 are testis-specific. Isoform 1 and isoform 4 are ubiquitously expressed. Isoform 2 is expressed at low levels in the testis and brain.

It is found in the nucleus. Its subcellular location is the nucleus speckle. The protein localises to the nucleoplasm. In terms of biological role, non-catalytic component of the MSL histone acetyltransferase complex, a multiprotein complex that mediates the majority of histone H4 acetylation at 'Lys-16' (H4K16ac), an epigenetic mark that prevents chromatin compaction. The MSL complex is required for chromosome stability and genome integrity by maintaining homeostatic levels of H4K16ac. The MSL complex is also involved in gene dosage by promoting up-regulation of genes expressed by the X chromosome. X up-regulation is required to compensate for autosomal biallelic expression. The MSL complex also participates in gene dosage compensation by promoting expression of Tsix non-coding RNA. Within the MSL complex, acts as a scaffold to tether MSL3 and KAT8 together for enzymatic activity regulation. Greatly enhances MSL2 E3 ubiquitin ligase activity, promoting monoubiquitination of histone H2B at 'Lys-34' (H2BK34Ub). This modification in turn stimulates histone H3 methylation at 'Lys-4' (H3K4me) and 'Lys-79' (H3K79me) and leads to gene activation, including that of HOXA9 and MEIS1. This chain is Male-specific lethal 1 homolog, found in Mus musculus (Mouse).